A 209-amino-acid polypeptide reads, in one-letter code: High frequency lysogenization protein HflD homolog (209 aa).

This sequence belongs to the HflD family.

It is found in the cytoplasm. Its subcellular location is the cell inner membrane. This chain is High frequency lysogenization protein HflD homolog, found in Halorhodospira halophila (strain DSM 244 / SL1) (Ectothiorhodospira halophila (strain DSM 244 / SL1)).